The following is a 132-amino-acid chain: Small ribosomal subunit protein uS11c (132 aa).

Belongs to the universal ribosomal protein uS11 family. Part of the 30S ribosomal subunit.

The protein localises to the plastid. It is found in the chloroplast. The chain is Small ribosomal subunit protein uS11c from Cryptomeria japonica (Japanese cedar).